The primary structure comprises 1088 residues: Pathogenesis-related homeodomain protein (1088 aa).

8 repeat units span residues 140–152, 173–199, 205–239, 240–274, 283–295, 316–342, 348–382, and 383–417. The interval 140–295 is 2 X 13 AA repeats; that stretch reads INMGQKETMP…EQKETIPEQV (156 aa). Residues 173-342 are 2 X 27 AA approximate repeats; that stretch reads NSYQSGLPPE…HAQFGHQSDD (170 aa). Residues 205 to 274 form a 2 X 35 AA approximate tandem repeats (type C) region; that stretch reads GLVELVIGQK…SRGRPRKVQN (70 aa). The disordered stretch occupies residues 220-282; it reads PSQLVETGKR…QNSPTSFLEN (63 aa). 2 DNA-binding regions (a.T hook) span residues 226–236 and 261–271; these read TGKRGRGRPRK and TGKRSRGRPRK. The segment covering 272–282 has biased composition (polar residues); the sequence is VQNSPTSFLEN. A compositionally biased stretch (polar residues) spans 303–320; it reads SLTIPTDNQSRTYNSDQS. 2 disordered regions span residues 303–343 and 363–484; these read SLTI…SDDT and PSQL…RMEE. Residues 348 to 417 are 2 X 35 AA approximate tandem repeats (type C); the sequence is GFKELVIGQE…SRGRPRKVQD (70 aa). DNA-binding regions (a.T hook) lie at residues 369–379 and 404–414; these read AGKRGRGRPRK and TGKRSRGRPRK. The PHD-type zinc finger occupies 578-635; that stretch reads DIFCAKCGSKDVTLSNDIILCDGACDRGFHQFCLDPPLLKEYIPPDDEGWLCPGCECK. Disordered stretches follow at residues 667-810 and 851-901; these read AASG…PLYP and EEYG…ARES. Residues 678 to 693 form a 4-1 repeat; that stretch reads GLPSDDSEDDDYDPGG. The interval 678–744 is 2 X 16 AA Asp/Glu-rich (acidic) repeats; the sequence is GLPSDDSEDD…SEDDEYDPSG (67 aa). Positions 705-718 are enriched in acidic residues; that stretch reads SSTDESDYQSESDD. A 4-2 repeat occupies 729 to 744; it reads GLPSDDSEDDEYDPSG. 2 stretches are compositionally biased toward basic and acidic residues: residues 788-802 and 874-901; these read DHVR…HPEQ and NNSD…ARES. Residues 935-994 constitute a DNA-binding region (homeobox); sequence KSTSKTLHGEHATQRLLQSFKENQYPQRAVKESLAAELALSVRQVSNWFNNRRWSFRHSS.

This sequence belongs to the PHD-associated homeobox family.

It is found in the nucleus. Functionally, specifically binds to the fungal elicitor-responsive DNA element, 5'-CTAATTGTTTA-3', of the gene PR2 promoter. The chain is Pathogenesis-related homeodomain protein (PRH) from Petroselinum crispum (Parsley).